The chain runs to 764 residues: FAST kinase domain-containing protein 5, mitochondrial (764 aa).

At S95 the chain carries Phosphoserine. K507 carries the N6-acetyllysine modification. One can recognise an RAP domain in the interval 697–757; the sequence is LAIQFTNRNQ…RLEKLAFLHE (61 aa).

It belongs to the FAST kinase family. Found in a complex with GRSF1, DDX28, DHX30 and FASTKD2. Associates with the 12S mitochondrial rRNA (12S mt-rRNA).

The protein localises to the mitochondrion matrix. It localises to the mitochondrion nucleoid. Its function is as follows. Plays an important role in the processing of non-canonical mitochondrial mRNA precursors. In Macaca fascicularis (Crab-eating macaque), this protein is FAST kinase domain-containing protein 5, mitochondrial (FASTKD5).